A 1114-amino-acid chain; its full sequence is Probable guanine nucleotide exchange factor MCF2L2 (1114 aa).

In terms of domain architecture, CRAL-TRIO spans 11-193 (PQELTRRLAT…ELGGTLEYRH (183 aa)). One copy of the Spectrin repeat lies at 323–428 (QHFEHDFCKA…KWDILGKSLE (106 aa)). The disordered stretch occupies residues 530-614 (QTRPVQPVAP…NPELEQQARL (85 aa)). The segment covering 546-559 (KWVSSKTSQPSTSV) has biased composition (polar residues). Residues 577-606 (LNSRGKEDDETKFEVKSEEIFESHHERGNP) show a composition bias toward basic and acidic residues. The DH domain maps to 619–822 (PRRRIIRDLL…EDLIKSCELA (204 aa)). A PH domain is found at 834–954 (DIGKLGKLLL…WFSEISKLLM (121 aa)). Polar residues predominate over residues 962–975 (DQGNPQFEMSTSKG). Residues 962–1114 (DQGNPQFEMS…LRPRTSAQES (153 aa)) are disordered. Over residues 986–997 (NMERATTSKEDP) the composition is skewed to basic and acidic residues. Positions 1017–1028 (TFEDCEGAEDME) are enriched in acidic residues. Basic and acidic residues-rich tracts occupy residues 1043–1067 (DDSH…GEKE) and 1074–1084 (TATRSTEEERA).

Belongs to the MCF2 family. In terms of tissue distribution, significantly expressed in brain and modestly in pancreas, brain and testis.

Functionally, probably functions as a guanine nucleotide exchange factor. The sequence is that of Probable guanine nucleotide exchange factor MCF2L2 (MCF2L2) from Homo sapiens (Human).